The following is a 359-amino-acid chain: Putative nucleotidyltransferase MAB21L1 (359 aa).

A ribonucleoside 5'-triphosphate-binding positions include 23–24 (RK) and 63–66 (FEGL). Positions 73 and 75 each coordinate Mg(2+). A ribonucleoside 5'-triphosphate is bound by residues Lys248 and 252–255 (SLLK).

It belongs to the mab-21 family. In terms of assembly, monomer. Homodecamer; composed of 2 back to back homopentamers. The protein may exist as monomer in solution and oiligomerizes upon ligand binding.

The protein resides in the nucleus. Functionally, putative nucleotidyltransferase required for several aspects of embryonic development including normal development of the eye. It is unclear whether it displays nucleotidyltransferase activity in vivo. Binds single-stranded RNA (ssRNA). This chain is Putative nucleotidyltransferase MAB21L1 (mab21l1), found in Danio rerio (Zebrafish).